Consider the following 224-residue polypeptide: Urease accessory protein UreF (224 aa).

It belongs to the UreF family. In terms of assembly, ureD, UreF and UreG form a complex that acts as a GTP-hydrolysis-dependent molecular chaperone, activating the urease apoprotein by helping to assemble the nickel containing metallocenter of UreC. The UreE protein probably delivers the nickel.

Its subcellular location is the cytoplasm. Functionally, required for maturation of urease via the functional incorporation of the urease nickel metallocenter. In Pseudomonas fluorescens (strain Pf0-1), this protein is Urease accessory protein UreF.